The chain runs to 325 residues: Anthranilate phosphoribosyltransferase (325 aa).

5-phospho-alpha-D-ribose 1-diphosphate contacts are provided by residues Gly73, 76–77 (GD), Thr81, 83–86 (NIST), 100–108 (KHGNVSITS), and Ser112. An anthranilate-binding site is contributed by Gly73. Position 85 (Ser85) interacts with Mg(2+). Asn103 contributes to the anthranilate binding site. Arg158 is an anthranilate binding site. Asp216 and Glu217 together coordinate Mg(2+).

This sequence belongs to the anthranilate phosphoribosyltransferase family. Homodimer. Requires Mg(2+) as cofactor.

The enzyme catalyses N-(5-phospho-beta-D-ribosyl)anthranilate + diphosphate = 5-phospho-alpha-D-ribose 1-diphosphate + anthranilate. The protein operates within amino-acid biosynthesis; L-tryptophan biosynthesis; L-tryptophan from chorismate: step 2/5. Its function is as follows. Catalyzes the transfer of the phosphoribosyl group of 5-phosphorylribose-1-pyrophosphate (PRPP) to anthranilate to yield N-(5'-phosphoribosyl)-anthranilate (PRA). This chain is Anthranilate phosphoribosyltransferase, found in Methanococcus aeolicus (strain ATCC BAA-1280 / DSM 17508 / OCM 812 / Nankai-3).